Here is a 208-residue protein sequence, read N- to C-terminus: Regulator of G-protein signaling 4 (208 aa).

3 S-palmitoyl cysteine lipidation sites follow: C2, C12, and C95. An RGS domain is found at 62–178; the sequence is SLENLIHHDR…LKSPYLDLVS (117 aa).

In terms of processing, palmitoylated on Cys-2 and/or Cys-12. Post-translationally, phosphorylated by cyclic GMP-dependent protein kinase. As to expression, expressed in the developing nervous system.

Its function is as follows. Inhibits signal transduction by increasing the GTPase activity of G protein alpha subunits thereby driving them into their inactive GDP-bound form. Activity on G(z)-alpha is inhibited by phosphorylation of the G-protein. Activity on G(z)-alpha and G(i)-alpha-1 is inhibited by palmitoylation of the G-protein. The polypeptide is Regulator of G-protein signaling 4 (RGS4) (Gallus gallus (Chicken)).